Reading from the N-terminus, the 454-residue chain is Serine/threonine-protein kinase NLK2 (454 aa).

A Protein kinase domain is found at 67 to 356 (PEPDRPIGYG…AKDALAHPYL (290 aa)). Residues 73–81 (IGYGAFGVV) and lysine 96 contribute to the ATP site. The active-site Proton acceptor is aspartate 193.

The protein belongs to the protein kinase superfamily. CMGC Ser/Thr protein kinase family. MAP kinase subfamily. As to quaternary structure, interacts with sox11, hmgxb4/hmg2l1, rnf138/narf, stat3.1 and mef2a. It depends on Mg(2+) as a cofactor.

Its subcellular location is the nucleus. The protein localises to the cytoplasm. The enzyme catalyses L-seryl-[protein] + ATP = O-phospho-L-seryl-[protein] + ADP + H(+). It carries out the reaction L-threonyl-[protein] + ATP = O-phospho-L-threonyl-[protein] + ADP + H(+). Its activity is regulated as follows. Activated by tyrosine and threonine phosphorylation. Its function is as follows. Negatively regulates Wnt/beta-catenin-signaling during development. Plays a role together with sox11 in neural induction during early embryogenesis. Involved in TGFbeta-mediated mesoderm induction in early embryos, acting downstream of map3k7/tak1 to phosphorylate stat3. Augments the rnf138/narf-directed ubiquitination and degradation of tcf/lef by enhancing the association of rnf138/narf and tcf/lef. Phosphorylates mef2a to play a role in anterior neural development, including eye formation. This Xenopus tropicalis (Western clawed frog) protein is Serine/threonine-protein kinase NLK2 (nlk.2).